A 292-amino-acid polypeptide reads, in one-letter code: Beta-lactamase-like protein 2 homolog (292 aa).

Zn(2+) contacts are provided by histidine 76, histidine 78, aspartate 80, histidine 81, histidine 145, aspartate 163, and histidine 198.

Belongs to the metallo-beta-lactamase superfamily. Glyoxalase II family.

The chain is Beta-lactamase-like protein 2 homolog from Drosophila melanogaster (Fruit fly).